The sequence spans 53 residues: Conotoxin Bu27 (53 aa).

The propeptide occupies 1–12 (ASDGRNAVVHER). Residue P14 is modified to 4-hydroxyproline. 4-carboxyglutamate is present on E15. O-linked (HexNAc...) threonine glycans are attached at residues T19 and T21. Residues P29, P34, P35, P43, P44, and P48 each carry the 4-hydroxyproline modification. The residue at position 48 (P48) is a Proline amide. Positions 49–53 (GRRND) are excised as a propeptide.

Belongs to the conotoxin A superfamily. Post-translationally, contains 3 disulfide bonds. In terms of tissue distribution, expressed by the venom duct.

It localises to the secreted. Functionally, probable neurotoxin with ion channel inhibitor activity. The polypeptide is Conotoxin Bu27 (Conus bullatus (Bubble cone)).